Reading from the N-terminus, the 308-residue chain is 2-dehydro-3-deoxy-phosphogluconate/2-dehydro-3-deoxy-6-phosphogalactonate aldolase (308 aa).

Residues 57 to 58 (TT), 144 to 146 (YNY), and 169 to 171 (KDT) each bind substrate. Lysine 169 serves as the catalytic Schiff-base intermediate with substrate.

Belongs to the DapA family. KDPG aldolase subfamily. Homotetramer; dimer of dimers.

The catalysed reaction is 2-dehydro-3-deoxy-6-phospho-D-gluconate = D-glyceraldehyde 3-phosphate + pyruvate. It catalyses the reaction 2-dehydro-3-deoxy-6-phospho-D-galactonate = D-glyceraldehyde 3-phosphate + pyruvate. It functions in the pathway carbohydrate acid metabolism; 2-dehydro-3-deoxy-D-gluconate degradation; D-glyceraldehyde 3-phosphate and pyruvate from 2-dehydro-3-deoxy-D-gluconate: step 2/2. Functionally, involved in the degradation of glucose and galactose via the Entner-Doudoroff pathway. Catalyzes the reversible cleavage of 2-keto-3-deoxy-6-phosphogluconate (KDPG) and 2-keto-3-deoxygluconate (KDG) forming pyruvate and glyceraldehyde 3-phosphate or glyceraldehyde, respectively. It is also able to catalyze the reversible cleavage of 2-keto-3-deoxy-6-phosphogalactonate (KDPGal) and 2-keto-3-deoxygalactonate (KDGal). This Saccharolobus solfataricus (strain ATCC 35092 / DSM 1617 / JCM 11322 / P2) (Sulfolobus solfataricus) protein is 2-dehydro-3-deoxy-phosphogluconate/2-dehydro-3-deoxy-6-phosphogalactonate aldolase (eda).